A 139-amino-acid polypeptide reads, in one-letter code: GSK3-beta interaction protein (139 aa).

Positions 1–22 (METDCNPMELSSMSGFEEGSEL) are disordered. Residues 41-45 (VNDVL) are required for PRKAR2A interaction; contributes to a protective effect against H(2)O(2)-induced apoptosis. Residues 115-139 (SPAYREAFGNALLQRLEALKRDGQS) form an interaction with GSK3B and acts as a GSK3B inhibitor region.

The protein belongs to the GSKIP family. As to quaternary structure, forms a complex composed of PRKAR2A or PRKAR2B, GSK3B and GSKIP through GSKIP interaction; facilitates PKA-induced phosphorylation of GSK3B leading to GSK3B inactivation; recruits DNM1L through GSK3B for PKA-mediated phosphorylation of DNM1L; promotes beta-catenin degradation through GSK3B-induced phosphorylation of beta-catenin; stabilizes beta-catenin and enhances Wnt-induced signaling through PKA-induced phosphorylation of beta-catenin. Interacts with GSK3B; induces GSK3B-mediated phosphorylation of GSKIP and inhibits GSK3B kinase activity. In terms of processing, phosphorylated by GSK3B.

Its subcellular location is the cytoplasm. The protein resides in the nucleus. Its function is as follows. A-kinase anchoring protein for GSK3B and PKA that regulates or facilitates their kinase activity towards their targets. The ternary complex enhances Wnt-induced signaling by facilitating the GSK3B- and PKA-induced phosphorylation of beta-catenin leading to beta-catenin degradation and stabilization respectively. Upon cAMP activation, the ternary complex contributes to neuroprotection against oxidative stress-induced apoptosis by facilitating the PKA-induced phosphorylation of DML1 and PKA-induced inactivation of GSK3B. During neurite outgrowth promotes neuron proliferation; while increases beta-catenin-induced transcriptional activity through GSK3B kinase activity inhibition, reduces N-cadherin level to promote cell cycle progression. May play a role in cleft palate formation and is required for postnatal life through modulation of the activity of GSK3B during development. The polypeptide is GSK3-beta interaction protein (Macaca fascicularis (Crab-eating macaque)).